We begin with the raw amino-acid sequence, 937 residues long: AP-2 complex subunit beta (937 aa).

Thr-2 is subject to N-acetylthreonine. Ser-4 carries the post-translational modification Phosphoserine. Residue Lys-265 is modified to N6-acetyllysine. Tyr-737 carries the post-translational modification Phosphotyrosine; by SRC. The interaction with ARRB1 stretch occupies residues 841–937 (WKDIPNENEL…YQVYDSILKN (97 aa)). Tyr-928 carries the phosphotyrosine modification.

It belongs to the adaptor complexes large subunit family. As to quaternary structure, adaptor protein complex 2 (AP-2) is a heterotetramer composed of two large adaptins (alpha-type subunit AP2A1 or AP2A2 and beta-type subunit AP2B1), a medium adaptin (mu-type subunit AP2M1) and a small adaptin (sigma-type subunit AP2S1). Interacts with EPN1. Interacts with EPS15; clathrin competes with EPS15. Interacts with SNAP91; clathrin competes with SNAP91. Interacts with CLTC; clathrin competes with EPS15, SNAP91 and PIP5K1C. Interacts with LDLRAP1. Interacts with AMPH and BIN1. Interacts with ARF6 (GDP-bound). Interacts (dephosphorylated at Tyr-737) with ARRB1; phosphorylation of AP2B1 at Tyr-737 disrupts the interaction. Interacts with SLC2A8. Interacts with SCYL1 and SCYL2. Interacts with TGFBR1 and TGFBR2. Interacts with PIP5K1C; clathrin competes with PIP5K1C. Interacts with DENND1B, but not with DENND1A, nor DENND1C. Interacts with FCHO1. Interacts with RFTN1. Interacts with KIAA1107. Together with AP2A1 or AP2A2 and AP2M1, it interacts with ADAM10; this interaction facilitates ADAM10 endocytosis from the plasma membrane during long-term potentiation in hippocampal neurons. Post-translationally, phosphorylation at Tyr-737 by SRC occurs at the plasma membrane in clathrin-coated vesicles (CCVs). In terms of tissue distribution, expressed in the brain (at protein level).

The protein resides in the cell membrane. The protein localises to the membrane. Its subcellular location is the coated pit. Functionally, component of the adaptor protein complex 2 (AP-2). Adaptor protein complexes function in protein transport via transport vesicles in different membrane traffic pathways. Adaptor protein complexes are vesicle coat components and appear to be involved in cargo selection and vesicle formation. AP-2 is involved in clathrin-dependent endocytosis in which cargo proteins are incorporated into vesicles surrounded by clathrin (clathrin-coated vesicles, CCVs) which are destined for fusion with the early endosome. The clathrin lattice serves as a mechanical scaffold but is itself unable to bind directly to membrane components. Clathrin-associated adaptor protein (AP) complexes which can bind directly to both the clathrin lattice and to the lipid and protein components of membranes are considered to be the major clathrin adaptors contributing the CCV formation. AP-2 also serves as a cargo receptor to selectively sort the membrane proteins involved in receptor-mediated endocytosis. AP-2 seems to play a role in the recycling of synaptic vesicle membranes from the presynaptic surface. AP-2 recognizes Y-X-X-[FILMV] (Y-X-X-Phi) and [ED]-X-X-X-L-[LI] endocytosis signal motifs within the cytosolic tails of transmembrane cargo molecules. AP-2 may also play a role in maintaining normal post-endocytic trafficking through the ARF6-regulated, non-clathrin pathway. During long-term potentiation in hippocampal neurons, AP-2 is responsible for the endocytosis of ADAM10. The AP-2 beta subunit acts via its C-terminal appendage domain as a scaffolding platform for endocytic accessory proteins; at least some clathrin-associated sorting proteins (CLASPs) are recognized by their [DE]-X(1,2)-F-X-X-[FL]-X-X-X-R motif. The AP-2 beta subunit binds to clathrin heavy chain, promoting clathrin lattice assembly; clathrin displaces at least some CLASPs from AP2B1 which probably then can be positioned for further coat assembly. This Homo sapiens (Human) protein is AP-2 complex subunit beta (AP2B1).